Here is a 421-residue protein sequence, read N- to C-terminus: Glutamate dehydrogenase (421 aa).

K105 is an active-site residue. 220 to 226 (GYGNAGY) contributes to the NAD(+) binding site.

It belongs to the Glu/Leu/Phe/Val dehydrogenases family. As to quaternary structure, homohexamer.

Its subcellular location is the cytoplasm. It localises to the chromosome. The enzyme catalyses L-glutamate + NAD(+) + H2O = 2-oxoglutarate + NH4(+) + NADH + H(+). It catalyses the reaction L-glutamate + NADP(+) + H2O = 2-oxoglutarate + NH4(+) + NADPH + H(+). The protein is Glutamate dehydrogenase (gdhA) of Thermococcus kodakarensis (strain ATCC BAA-918 / JCM 12380 / KOD1) (Pyrococcus kodakaraensis (strain KOD1)).